Reading from the N-terminus, the 382-residue chain is D-galactonate dehydratase (382 aa).

Aspartate 183 contributes to the Mg(2+) binding site. The active-site Proton donor is histidine 185. Positions 209 and 235 each coordinate Mg(2+). Histidine 285 (proton acceptor) is an active-site residue.

The protein belongs to the mandelate racemase/muconate lactonizing enzyme family. GalD subfamily. Mg(2+) is required as a cofactor.

The catalysed reaction is D-galactonate = 2-dehydro-3-deoxy-D-galactonate + H2O. The protein operates within carbohydrate acid metabolism; D-galactonate degradation; D-glyceraldehyde 3-phosphate and pyruvate from D-galactonate: step 1/3. In terms of biological role, catalyzes the dehydration of D-galactonate to 2-keto-3-deoxy-D-galactonate. This Ralstonia nicotianae (strain ATCC BAA-1114 / GMI1000) (Ralstonia solanacearum) protein is D-galactonate dehydratase.